Consider the following 248-residue polypeptide: ATP synthase subunit a (248 aa).

A propeptide spans 1–3 (MLY) (removed in mature form). Helical transmembrane passes span 24 to 44 (MSLT…FFIF), 86 to 106 (IYMP…LVGL), 117 to 137 (FALP…IGFV), 146 to 166 (VLLP…VELL), 183 to 203 (ITSG…TSGI), 205 to 225 (LLFV…ELIV), and 227 to 247 (ILQA…SLIL).

It belongs to the ATPase A chain family. In terms of assembly, F-type ATPases have 2 components, CF(1) - the catalytic core - and CF(0) - the membrane proton channel. CF(1) has five subunits: alpha(3), beta(3), gamma(1), delta(1), epsilon(1). CF(0) has three main subunits: a, b and c.

It localises to the mitochondrion inner membrane. Functionally, mitochondrial membrane ATP synthase (F(1)F(0) ATP synthase or Complex V) produces ATP from ADP in the presence of a proton gradient across the membrane which is generated by electron transport complexes of the respiratory chain. F-type ATPases consist of two structural domains, F(1) - containing the extramembraneous catalytic core and F(0) - containing the membrane proton channel, linked together by a central stalk and a peripheral stalk. During catalysis, ATP synthesis in the catalytic domain of F(1) is coupled via a rotary mechanism of the central stalk subunits to proton translocation. Key component of the proton channel; it may play a direct role in the translocation of protons across the membrane. The protein is ATP synthase subunit a of Zancudomyces culisetae (Gut fungus).